The following is a 182-amino-acid chain: Protein GrpE (182 aa).

Residues 1–37 (MSDSSKERKKKFTGMVNKQKSEDQQNNSKQADDLDEL) form a disordered region.

Belongs to the GrpE family. Homodimer.

It localises to the cytoplasm. Its function is as follows. Participates actively in the response to hyperosmotic and heat shock by preventing the aggregation of stress-denatured proteins, in association with DnaK and GrpE. It is the nucleotide exchange factor for DnaK and may function as a thermosensor. Unfolded proteins bind initially to DnaJ; upon interaction with the DnaJ-bound protein, DnaK hydrolyzes its bound ATP, resulting in the formation of a stable complex. GrpE releases ADP from DnaK; ATP binding to DnaK triggers the release of the substrate protein, thus completing the reaction cycle. Several rounds of ATP-dependent interactions between DnaJ, DnaK and GrpE are required for fully efficient folding. The sequence is that of Protein GrpE from Wolbachia sp. subsp. Brugia malayi (strain TRS).